Here is a 611-residue protein sequence, read N- to C-terminus: Translation initiation factor RLI1 (611 aa).

2 4Fe-4S ferredoxin-type domains span residues 7-31 (RVAI…SCPV) and 46-75 (RIAF…IINL). ABC transporter domains lie at 77–318 (TNLE…FLDG) and 345–565 (AEKS…LKNL). ATP contacts are provided by residues 110 to 117 (GTNGIGKS) and 382 to 389 (GENGTGKT).

The protein belongs to the ABC transporter superfamily. ABCE family. In terms of assembly, component of the multifactor complex (MFC). The complex associates with pre-initiation complexes.

Its subcellular location is the cytoplasm. The protein localises to the nucleus. In terms of biological role, component of the multifactor complex (MFC) involved in translation initiation. Required for the binding of MFC to the 40S ribosome. Required for the processing and nuclear export of the 60S and 40S ribosomal subunits. In Chaetomium thermophilum (strain DSM 1495 / CBS 144.50 / IMI 039719) (Thermochaetoides thermophila), this protein is Translation initiation factor RLI1 (RLI1).